The sequence spans 399 residues: Stage III sporulation protein AE (399 aa).

A signal peptide spans M1–A24. 7 consecutive transmembrane segments (helical) span residues V104 to L124, A140 to I160, S172 to V192, G209 to V229, I248 to G268, V315 to L335, and I368 to I388.

Interacts with SpoIIIJ and YqjG.

It localises to the cell membrane. Its function is as follows. Required during sporulation for activation of sigma factor SpoIIIG/SigG after engulfment is completed in the prespore. Overexpression in the absence of SpoIIIJ is synthetically lethal. This is Stage III sporulation protein AE (spoIIIAE) from Bacillus subtilis (strain 168).